Reading from the N-terminus, the 118-residue chain is Large ribosomal subunit protein bL20 (118 aa).

This sequence belongs to the bacterial ribosomal protein bL20 family.

Functionally, binds directly to 23S ribosomal RNA and is necessary for the in vitro assembly process of the 50S ribosomal subunit. It is not involved in the protein synthesizing functions of that subunit. The sequence is that of Large ribosomal subunit protein bL20 from Thermosipho africanus (strain TCF52B).